A 251-amino-acid chain; its full sequence is CDP-diacylglycerol pyrophosphatase (251 aa).

Residues 4–24 (AGLLFLVMIVIAVVASGIGYW) form a helical membrane-spanning segment.

It belongs to the Cdh family.

It is found in the cell inner membrane. The enzyme catalyses a CDP-1,2-diacyl-sn-glycerol + H2O = a 1,2-diacyl-sn-glycero-3-phosphate + CMP + 2 H(+). It participates in phospholipid metabolism; CDP-diacylglycerol degradation; phosphatidate from CDP-diacylglycerol: step 1/1. This is CDP-diacylglycerol pyrophosphatase from Escherichia coli O8 (strain IAI1).